Here is a 121-residue protein sequence, read N- to C-terminus: DNA-directed RNA polymerase subunit Rpo8 (121 aa).

It belongs to the archaeal Rpo8 RNA polymerase subunit family. Part of the 13-subunit RNA polymerase complex. This subunit is phosphorylated.

It localises to the cytoplasm. The enzyme catalyses RNA(n) + a ribonucleoside 5'-triphosphate = RNA(n+1) + diphosphate. Functionally, DNA-dependent RNA polymerase (RNAP) catalyzes the transcription of DNA into RNA using the four ribonucleoside triphosphates as substrates. The protein is DNA-directed RNA polymerase subunit Rpo8 of Sulfolobus acidocaldarius (strain ATCC 33909 / DSM 639 / JCM 8929 / NBRC 15157 / NCIMB 11770).